The following is a 309-amino-acid chain: Porphobilinogen deaminase (309 aa).

Cys243 bears the S-(dipyrrolylmethanemethyl)cysteine mark.

This sequence belongs to the HMBS family. In terms of assembly, monomer. It depends on dipyrromethane as a cofactor.

It carries out the reaction 4 porphobilinogen + H2O = hydroxymethylbilane + 4 NH4(+). The protein operates within porphyrin-containing compound metabolism; protoporphyrin-IX biosynthesis; coproporphyrinogen-III from 5-aminolevulinate: step 2/4. Its function is as follows. Tetrapolymerization of the monopyrrole PBG into the hydroxymethylbilane pre-uroporphyrinogen in several discrete steps. This Deinococcus radiodurans (strain ATCC 13939 / DSM 20539 / JCM 16871 / CCUG 27074 / LMG 4051 / NBRC 15346 / NCIMB 9279 / VKM B-1422 / R1) protein is Porphobilinogen deaminase (hemC).